We begin with the raw amino-acid sequence, 160 residues long: RxLR effector protein PexRD44 (160 aa).

The signal sequence occupies residues Met1–Ala21. Residues Arg54–Arg76 carry the RxLR-dEER motif.

The protein belongs to the RxLR effector family.

Its subcellular location is the secreted. The protein localises to the host cell membrane. It localises to the host nucleus. It is found in the host nucleolus. In terms of biological role, effector that is involved in host plant infection. Contributes to virulence during the early infection stage, by inhibiting plant defense responses induced by both PAMP-triggered immunity (PTI) and effector-triggered immunity (ETI). The polypeptide is RxLR effector protein PexRD44 (Phytophthora infestans (strain T30-4) (Potato late blight agent)).